The chain runs to 243 residues: Protein GID8 homolog (243 aa).

The 33-residue stretch at 40–72 folds into the LisH domain; sequence RKEDMNTLVMNFLVTEGYVEAAEKFQRESGTKP. The CTLH domain occupies 78–135; it reads TITDRMAVKKAVQNGNVEDAIEKVNDLNPEILDTNPELFFHLQQQRLIELIRQGKTEE.

It belongs to the GID8 family. As to quaternary structure, interacts with RANBPM.

It localises to the cytoplasm. This is Protein GID8 homolog from Arabidopsis thaliana (Mouse-ear cress).